The sequence spans 117 residues: Large ribosomal subunit protein bL17 (117 aa).

The protein belongs to the bacterial ribosomal protein bL17 family. In terms of assembly, part of the 50S ribosomal subunit. Contacts protein L32.

This chain is Large ribosomal subunit protein bL17, found in Thermomicrobium roseum (strain ATCC 27502 / DSM 5159 / P-2).